A 179-amino-acid polypeptide reads, in one-letter code: Peroxiredoxin (179 aa).

The Thioredoxin domain occupies 2 to 152 (TMEKQVPIVT…VEGWFEEEGF (151 aa)). The active-site Cysteine sulfenic acid (-SOH) intermediate (for peroxiredoxin activity) is Cys56.

This sequence belongs to the peroxiredoxin family. Prx5 subfamily. Monomer.

The enzyme catalyses a hydroperoxide + 2 glutathione = an alcohol + glutathione disulfide + H2O. Functionally, thiol-specific peroxidase that catalyzes the reduction of hydrogen peroxide and organic hydroperoxides to water and alcohols, respectively. Plays a role in cell protection against oxidative stress by detoxifying peroxides. In Rhizobium etli, this protein is Peroxiredoxin.